A 24-amino-acid polypeptide reads, in one-letter code: Coenzyme PQQ synthesis protein A (24 aa).

A cross-link (pyrroloquinoline quinone (Glu-Tyr)) is located at residues 16–20 (EVTMY).

Belongs to the PqqA family.

It participates in cofactor biosynthesis; pyrroloquinoline quinone biosynthesis. Its function is as follows. Required for coenzyme pyrroloquinoline quinone (PQQ) biosynthesis. PQQ is probably formed by cross-linking a specific glutamate to a specific tyrosine residue and excising these residues from the peptide. This chain is Coenzyme PQQ synthesis protein A, found in Pseudomonas syringae pv. syringae (strain B728a).